The chain runs to 110 residues: Large ribosomal subunit protein uL24 (110 aa).

Belongs to the universal ribosomal protein uL24 family. As to quaternary structure, part of the 50S ribosomal subunit.

In terms of biological role, one of two assembly initiator proteins, it binds directly to the 5'-end of the 23S rRNA, where it nucleates assembly of the 50S subunit. Its function is as follows. One of the proteins that surrounds the polypeptide exit tunnel on the outside of the subunit. This is Large ribosomal subunit protein uL24 from Ureaplasma parvum serovar 3 (strain ATCC 27815 / 27 / NCTC 11736).